A 65-amino-acid chain; its full sequence is Large ribosomal subunit protein bL35 (65 aa).

The tract at residues 30–65 (AFRSHLAQNKSTKQKRQSKHGTFMHPTDYKRLKDLM) is disordered. Basic and acidic residues predominate over residues 56 to 65 (TDYKRLKDLM).

This sequence belongs to the bacterial ribosomal protein bL35 family.

The polypeptide is Large ribosomal subunit protein bL35 (Mycoplasma mobile (strain ATCC 43663 / 163K / NCTC 11711) (Mesomycoplasma mobile)).